The sequence spans 861 residues: Probable alpha,alpha-trehalose-phosphate synthase [UDP-forming] 10 (861 aa).

Phosphoserine is present on Ser-5. Thr-32 is modified (phosphothreonine). The tract at residues 59–546 (ERKIIVANFL…ARSFSQDLER (488 aa)) is glycosyltransferase.

In the N-terminal section; belongs to the glycosyltransferase 20 family. It in the C-terminal section; belongs to the trehalose phosphatase family.

The catalysed reaction is D-glucose 6-phosphate + UDP-alpha-D-glucose = alpha,alpha-trehalose 6-phosphate + UDP + H(+). The protein is Probable alpha,alpha-trehalose-phosphate synthase [UDP-forming] 10 (TPS10) of Arabidopsis thaliana (Mouse-ear cress).